We begin with the raw amino-acid sequence, 392 residues long: Phosphoglycerate kinase (392 aa).

Residues 21-23 (DLN), R36, 59-62 (HLGR), R114, and R147 each bind substrate. ATP contacts are provided by residues K198, E320, and 346-349 (GGDT).

The protein belongs to the phosphoglycerate kinase family. In terms of assembly, monomer.

The protein localises to the cytoplasm. It carries out the reaction (2R)-3-phosphoglycerate + ATP = (2R)-3-phospho-glyceroyl phosphate + ADP. It participates in carbohydrate degradation; glycolysis; pyruvate from D-glyceraldehyde 3-phosphate: step 2/5. This is Phosphoglycerate kinase from Nitrosomonas europaea (strain ATCC 19718 / CIP 103999 / KCTC 2705 / NBRC 14298).